The primary structure comprises 37 residues: MKVRASVKKICRNCKVIKRNGVVRIICIEPKHKQRQG.

The protein belongs to the bacterial ribosomal protein bL36 family.

This Photobacterium profundum (strain SS9) protein is Large ribosomal subunit protein bL36.